A 63-amino-acid chain; its full sequence is Large ribosomal subunit protein uL29 (63 aa).

This sequence belongs to the universal ribosomal protein uL29 family.

This chain is Large ribosomal subunit protein uL29, found in Pseudomonas aeruginosa (strain UCBPP-PA14).